Here is a 90-residue protein sequence, read N- to C-terminus: DNA-directed RNA polymerase subunit omega (90 aa).

It belongs to the RNA polymerase subunit omega family. In terms of assembly, the RNAP catalytic core consists of 2 alpha, 1 beta, 1 beta' and 1 omega subunit. When a sigma factor is associated with the core the holoenzyme is formed, which can initiate transcription.

It catalyses the reaction RNA(n) + a ribonucleoside 5'-triphosphate = RNA(n+1) + diphosphate. Promotes RNA polymerase assembly. Latches the N- and C-terminal regions of the beta' subunit thereby facilitating its interaction with the beta and alpha subunits. This chain is DNA-directed RNA polymerase subunit omega, found in Streptomyces griseus subsp. griseus (strain JCM 4626 / CBS 651.72 / NBRC 13350 / KCC S-0626 / ISP 5235).